The chain runs to 627 residues: DEAD-box ATP-dependent RNA helicase 35A (627 aa).

Low complexity-rich tracts occupy residues 1-15 (MAAA…AAAA) and 52-61 (SSSAAEAASD). Disordered regions lie at residues 1–23 (MAAA…EDNY) and 40–85 (LRRL…LEAS). Over residues 62–72 (LPPPPPPPPNQ) the composition is skewed to pro residues. The short motif at 182–210 (RDFRDLRLPEPMLRKLREKGIVQPTPIQV) is the Q motif element. Positions 213 to 397 (LPVVLSGRDM…KSALVKPVIV (185 aa)) constitute a Helicase ATP-binding domain. 226 to 233 (AFTGSGKT) is an ATP binding site. The short motif at 345-348 (DEAD) is the DEAD box element. Positions 408–568 (DVIQEVEYVK…RIPPVLAELN (161 aa)) constitute a Helicase C-terminal domain. The segment at 584 to 601 (KGCAYCGGLGHRVTDCPK) adopts a CCHC-type zinc-finger fold.

Belongs to the DEAD box helicase family. DDX41 subfamily.

It carries out the reaction ATP + H2O = ADP + phosphate + H(+). The protein is DEAD-box ATP-dependent RNA helicase 35A of Oryza sativa subsp. japonica (Rice).